Reading from the N-terminus, the 249-residue chain is MTNTTTIQFNALLLDIEGTITSISFVKDELFPYAFENVGKYLEEHYDKPATQIIIEDLRRLAEQQLETDADVVKIRERKQECIEDVTKNVRHWIKRDKKLTPMKALQGLIWEEAYQRGYVKGHVYPDVLPILKIIESRQIPIYIYSSGSVHAQKLLFANSVEGDMTKILYGYFDTNIGLKGETSSYTKISEQIGVPEKDILFLTDVEAEAAAASKAGLQTRLVIRPGNATLTQEAKNAYGTIHTLEEIL.

Positions 15 and 17 each coordinate Mg(2+). Residues 146 to 147 (SS) and lysine 180 each bind substrate. Aspartate 205 contributes to the Mg(2+) binding site.

It belongs to the HAD-like hydrolase superfamily. MasA/MtnC family. In terms of assembly, monomer. Mg(2+) serves as cofactor.

It localises to the cytoplasm. The protein localises to the nucleus. The catalysed reaction is 5-methylsulfanyl-2,3-dioxopentyl phosphate + H2O = 1,2-dihydroxy-5-(methylsulfanyl)pent-1-en-3-one + phosphate. The protein operates within amino-acid biosynthesis; L-methionine biosynthesis via salvage pathway; L-methionine from S-methyl-5-thio-alpha-D-ribose 1-phosphate: step 3/6. Its pathway is amino-acid biosynthesis; L-methionine biosynthesis via salvage pathway; L-methionine from S-methyl-5-thio-alpha-D-ribose 1-phosphate: step 4/6. In terms of biological role, bifunctional enzyme that catalyzes the enolization of 2,3-diketo-5-methylthiopentyl-1-phosphate (DK-MTP-1-P) into the intermediate 2-hydroxy-3-keto-5-methylthiopentenyl-1-phosphate (HK-MTPenyl-1-P), which is then dephosphorylated to form the acireductone 1,2-dihydroxy-3-keto-5-methylthiopentene (DHK-MTPene). The chain is Enolase-phosphatase E1 from Caenorhabditis briggsae.